Reading from the N-terminus, the 214-residue chain is 3,4-dihydroxy-2-butanone 4-phosphate synthase (214 aa).

Residues arginine 37–glutamate 38, aspartate 42, arginine 150–threonine 154, and glutamate 174 contribute to the D-ribulose 5-phosphate site. Glutamate 38 lines the Mg(2+) pocket. Position 153 (histidine 153) interacts with Mg(2+).

Belongs to the DHBP synthase family. As to quaternary structure, homodimer. The cofactor is Mg(2+). Mn(2+) serves as cofactor.

It catalyses the reaction D-ribulose 5-phosphate = (2S)-2-hydroxy-3-oxobutyl phosphate + formate + H(+). Its pathway is cofactor biosynthesis; riboflavin biosynthesis; 2-hydroxy-3-oxobutyl phosphate from D-ribulose 5-phosphate: step 1/1. Catalyzes the conversion of D-ribulose 5-phosphate to formate and 3,4-dihydroxy-2-butanone 4-phosphate. This is 3,4-dihydroxy-2-butanone 4-phosphate synthase from Nitratidesulfovibrio vulgaris (strain ATCC 29579 / DSM 644 / CCUG 34227 / NCIMB 8303 / VKM B-1760 / Hildenborough) (Desulfovibrio vulgaris).